The sequence spans 709 residues: Polyribonucleotide nucleotidyltransferase (709 aa).

2 residues coordinate Mg(2+): Asp-490 and Asp-496. The KH domain maps to 557-616; sequence PKVITMRVLPEKIPVIIGPSGKNIKKIIDETGVKIDLDQEGLVRIYAVDGESADKAKEMI. Residues 626-694 enclose the S1 motif domain; it reads GEVYMGKVTR…EMGRAKVSLK (69 aa).

Belongs to the polyribonucleotide nucleotidyltransferase family. Mg(2+) serves as cofactor.

Its subcellular location is the cytoplasm. It catalyses the reaction RNA(n+1) + phosphate = RNA(n) + a ribonucleoside 5'-diphosphate. Functionally, involved in mRNA degradation. Catalyzes the phosphorolysis of single-stranded polyribonucleotides processively in the 3'- to 5'-direction. The polypeptide is Polyribonucleotide nucleotidyltransferase (Persephonella marina (strain DSM 14350 / EX-H1)).